Reading from the N-terminus, the 24-residue chain is Humanin (24 aa).

Residues 1 to 12 (MAPRGFSCLLLL) form a sufficient to interact with BID and BIM and to suppress BID and BIM activity region. Positions 3-19 (PRGFSCLLLLTSEIDLP) are sufficient for neuroprotective activity. A sufficient to interact with MPP8 region spans residues 5-12 (GFSCLLLL). Required for secretion regions lie at residues 9–11 (LLL) and 19–20 (PV).

Homodimer. Interacts with amyloid-beta protein 42 (Abeta42); the interaction prevents Abeta42 fibril formation. Interacts with BAX; forms fibers with BAX which results in BAX conformational changes and sequestering of BAX into the fibers, preventing BAX activation. Interacts with both full-length BID and cleaved BID p15; forms fibers with BID which results in BID conformational changes and sequestering of BID into the fibers, preventing BID activation. Interacts with BIM isoform BimEL but not with BIM isoforms BimL or BimS; the interaction prevents BIM-induced apoptosis. Interacts with IGFBP3; competes with importin KPNB1 for binding to IGFBP3, blocking IGFBP3 nuclear import. Interacts with TRIM11. Interacts with MPP8. In terms of tissue distribution, expressed in testis, seminal plasma and sperm (at protein level). Higher seminal plasma levels are associated with normospermia than with oligospermia, asthenospermia or oligoasthenospermia (at protein level). Higher sperm levels are associated with normospermia than with asthenospermia (at protein level). Expressed in retinal epithelial cells (at protein level). Expressed in the heart, skeletal muscle, kidney and liver. Lesser but significant expression is observed in the brain and the gastrointestinal tract. Expressed in the AD brain, where it is found in some of the large intact neurons of the occipital lobes and small and round reactive glial cells in the hippocampus.

It localises to the secreted. The protein localises to the cytoplasm. The protein resides in the cell projection. Its subcellular location is the cilium. It is found in the flagellum. It localises to the nucleus. The protein localises to the mitochondrion. Its function is as follows. Plays a role as a neuroprotective factor. Protects against neuronal cell death induced by multiple different familial Alzheimer disease genes and amyloid-beta proteins in Alzheimer disease. Mediates its neuroprotective effect by interacting with a receptor complex composed of IL6ST/GP130, IL27RA/WSX1 and CNTFR. Also acts as a ligand for G-protein coupled receptors FPR2/FPRL1 and FPR3/FPRL2. Inhibits amyloid-beta protein 40 fibril formation. Also inhibits amyloid-beta protein 42 fibril formation. Suppresses apoptosis by binding to BAX and preventing the translocation of BAX from the cytosol to mitochondria. Also suppresses apoptosis by binding to BID and inhibiting the interaction of BID with BAX and BAK which prevents oligomerization of BAX and BAK and suppresses release of apoptogenic proteins from mitochondria. Forms fibers with BAX and also with BID, inducing BAX and BID conformational changes and sequestering them into the fibers which prevents their activation. Can also suppress apoptosis by interacting with BIM isoform BimEL, inhibiting BimEL-induced activation of BAX, blocking oligomerization of BAX and BAK, and preventing release of apoptogenic proteins from mitochondria. Plays a role in up-regulation of anti-apoptotic protein BIRC6/APOLLON, leading to inhibition of neuronal cell death. Binds to IGFBP3 and specifically blocks IGFBP3-induced cell death. Competes with importin KPNB1 for binding to IGFBP3 which is likely to block IGFBP3 nuclear import. Induces chemotaxis of mononuclear phagocytes via FPR2/FPRL1. Reduces aggregation and fibrillary formation by suppressing the effect of APP on mononuclear phagocytes and acts by competitively inhibiting the access of FPR2 to APP. Protects retinal pigment epithelium (RPE) cells against oxidative stress-induced and endoplasmic reticulum (ER) stress-induced apoptosis. Promotes mitochondrial biogenesis in RPE cells following oxidative stress and promotes STAT3 phosphorylation which leads to inhibition of CASP3 release. Also reduces CASP4 levels in RPE cells, suppresses ER stress-induced mitochondrial superoxide production and plays a role in up-regulation of mitochondrial glutathione. Reduces testicular hormone deprivation-induced apoptosis of germ cells at the nonandrogen-sensitive stages of the seminiferous epithelium cycle. Protects endothelial cells against free fatty acid-induced inflammation by suppressing oxidative stress, reducing expression of TXNIP and inhibiting activation of the NLRP3 inflammasome which inhibits expression of pro-inflammatory cytokines IL1B and IL18. Protects against high glucose-induced endothelial cell dysfunction by mediating activation of ERK5 which leads to increased expression of transcription factor KLF2 and prevents monocyte adhesion to endothelial cells. Inhibits the inflammatory response in astrocytes. Increases the expression of PPARGC1A/PGC1A in pancreatic beta cells which promotes mitochondrial biogenesis. Increases insulin sensitivity. This is Humanin from Homo sapiens (Human).